The following is a 107-amino-acid chain: Conantokin-R (107 aa).

The N-terminal stretch at 1–24 (MQLYTYLYLLVSLVTFYLILGTGT) is a signal peptide. Residues 25-80 (LGHGGALTERRSTDATALKPEPVLLQKSSARSTDDNGNDRLTQMKRILKKRGNKAR) constitute a propeptide that is removed on maturation. Residues 26 to 64 (GHGGALTERRSTDATALKPEPVLLQKSSARSTDDNGNDR) are disordered. E83, E84, E91, and E95 each carry 4-carboxyglutamate. 2 residues coordinate a divalent metal cation: E91 and E95. C101 and C105 form a disulfide bridge.

It belongs to the conotoxin B superfamily. It depends on Ca(2+) as a cofactor. Mg(2+) is required as a cofactor. As to expression, expressed by the venom duct.

Its subcellular location is the secreted. Functionally, conantokins inhibit N-methyl-D-aspartate (NMDA) receptors. This toxin is potent in the following order of preference: NR2B approximately NR2A/GRIN2A &gt; NR2C/GRIN2C &gt;&gt; NR2D/GRIN2D. Induces sleep-like symptoms in young mice. Is a highly potent anticonvulsant compound. This chain is Conantokin-R, found in Conus radiatus (Rayed cone).